The sequence spans 313 residues: Probable 5-dehydro-4-deoxyglucarate dehydratase 1 (313 aa).

This sequence belongs to the DapA family.

The enzyme catalyses 5-dehydro-4-deoxy-D-glucarate + H(+) = 2,5-dioxopentanoate + CO2 + H2O. It participates in carbohydrate acid metabolism; D-glucarate degradation; 2,5-dioxopentanoate from D-glucarate: step 2/2. The protein is Probable 5-dehydro-4-deoxyglucarate dehydratase 1 of Streptomyces avermitilis (strain ATCC 31267 / DSM 46492 / JCM 5070 / NBRC 14893 / NCIMB 12804 / NRRL 8165 / MA-4680).